A 443-amino-acid chain; its full sequence is 23S rRNA (uracil(1939)-C(5))-methyltransferase RlmD (443 aa).

The 59-residue stretch at A12 to R70 folds into the TRAM domain. Positions 83, 89, 92, and 171 each coordinate [4Fe-4S] cluster. S-adenosyl-L-methionine is bound by residues Q276, F305, N310, E326, D353, and D373. C399 acts as the Nucleophile in catalysis.

This sequence belongs to the class I-like SAM-binding methyltransferase superfamily. RNA M5U methyltransferase family. RlmD subfamily.

The catalysed reaction is uridine(1939) in 23S rRNA + S-adenosyl-L-methionine = 5-methyluridine(1939) in 23S rRNA + S-adenosyl-L-homocysteine + H(+). Catalyzes the formation of 5-methyl-uridine at position 1939 (m5U1939) in 23S rRNA. In Shewanella amazonensis (strain ATCC BAA-1098 / SB2B), this protein is 23S rRNA (uracil(1939)-C(5))-methyltransferase RlmD.